The chain runs to 774 residues: Protein translocase subunit SecA 2 (774 aa).

Residues Gln-94, 112-116, and Asp-501 contribute to the ATP site; that span reads GEGKT.

This sequence belongs to the SecA family. In terms of assembly, monomer and homodimer. Part of the essential Sec protein translocation apparatus which comprises SecA, SecYEG and auxiliary proteins SecDF. Other proteins may also be involved.

Its subcellular location is the cell membrane. It is found in the cytoplasm. It carries out the reaction ATP + H2O + cellular proteinSide 1 = ADP + phosphate + cellular proteinSide 2.. In terms of biological role, part of the Sec protein translocase complex. Interacts with the SecYEG preprotein conducting channel. Has a central role in coupling the hydrolysis of ATP to the transfer of proteins into and across the cell membrane, serving as an ATP-driven molecular motor driving the stepwise translocation of polypeptide chains across the membrane. The chain is Protein translocase subunit SecA 2 from Mycobacterium sp. (strain JLS).